We begin with the raw amino-acid sequence, 347 residues long: Protein phosphatase 2C homolog 1 (347 aa).

Residues 1–41 (MKGSHPNAGSLLEPLHKLNPFSENSTSGHRKNASDHSADGE) are disordered. Positions 32–41 (NASDHSADGE) are enriched in basic and acidic residues. Residues 71-323 (LAGLMEDKNQ…DNITCIVVNL (253 aa)) form the PPM-type phosphatase domain. The Mn(2+) site is built by D109, G110, D275, and D314.

Belongs to the PP2C family. In terms of assembly, monomer. Mg(2+) is required as a cofactor. Requires Mn(2+) as cofactor.

It carries out the reaction O-phospho-L-seryl-[protein] + H2O = L-seryl-[protein] + phosphate. It catalyses the reaction O-phospho-L-threonyl-[protein] + H2O = L-threonyl-[protein] + phosphate. In terms of biological role, serine and threonine phosphatase. Has a specialized role in the heat shock response. May be responsible for the dephosphorylation of hsp90. The sequence is that of Protein phosphatase 2C homolog 1 (ptc1) from Schizosaccharomyces pombe (strain 972 / ATCC 24843) (Fission yeast).